A 252-amino-acid chain; its full sequence is Thiazole synthase (252 aa).

Lysine 98 serves as the catalytic Schiff-base intermediate with DXP. Residues glycine 159, 185-186 (AG), and 207-208 (AS) contribute to the 1-deoxy-D-xylulose 5-phosphate site.

It belongs to the ThiG family. In terms of assembly, homotetramer. Forms heterodimers with either ThiH or ThiS.

It localises to the cytoplasm. The catalysed reaction is [ThiS sulfur-carrier protein]-C-terminal-Gly-aminoethanethioate + 2-iminoacetate + 1-deoxy-D-xylulose 5-phosphate = [ThiS sulfur-carrier protein]-C-terminal Gly-Gly + 2-[(2R,5Z)-2-carboxy-4-methylthiazol-5(2H)-ylidene]ethyl phosphate + 2 H2O + H(+). The protein operates within cofactor biosynthesis; thiamine diphosphate biosynthesis. Functionally, catalyzes the rearrangement of 1-deoxy-D-xylulose 5-phosphate (DXP) to produce the thiazole phosphate moiety of thiamine. Sulfur is provided by the thiocarboxylate moiety of the carrier protein ThiS. In vitro, sulfur can be provided by H(2)S. This Mycobacterium tuberculosis (strain ATCC 25177 / H37Ra) protein is Thiazole synthase.